The following is a 572-amino-acid chain: Nuclear hormone receptor family member nhr-25 (572 aa).

The segment at residues 15 to 90 is a DNA-binding region (nuclear receptor); sequence GEMCPVCGDR…MGMKMEAVRA (76 aa). 2 NR C4-type zinc fingers span residues 18–38 and 54–78; these read CPVC…CESC and CSAE…FQKC. An NR LBD domain is found at 307–567; that stretch reads PTEKTVDHFY…PTPQATYTAV (261 aa).

The protein belongs to the nuclear hormone receptor family. As to quaternary structure, interacts with lin-39. Interacts with nob-1. Expressed in the epidermis, the developing somatic gonad, and a subset of other epithelial cells.

The protein resides in the nucleus. Functionally, orphan nuclear receptor and probable transcription activator, required during development. Plays a role in male tail tip morphogenesis regulating the expression of the transcription factor dmd-3 in a negative feedback loop. Regulates vulval precursor cell (VPC) differentiation, in concert with homeobox protein lin-39. Involved in promoting embryogenesis, in concert with homeobox protein nob-1. May play a role in modulation of lifespan and immunity. The chain is Nuclear hormone receptor family member nhr-25 from Caenorhabditis elegans.